Here is a 157-residue protein sequence, read N- to C-terminus: 2-C-methyl-D-erythritol 2,4-cyclodiphosphate synthase (157 aa).

Residues aspartate 8 and histidine 10 each coordinate a divalent metal cation. 4-CDP-2-C-methyl-D-erythritol 2-phosphate is bound by residues 8-10 (DVH) and 34-35 (HS). A divalent metal cation is bound at residue histidine 42. Residues 56–58 (DIG), 132–135 (TTNE), and arginine 142 each bind 4-CDP-2-C-methyl-D-erythritol 2-phosphate.

The protein belongs to the IspF family. As to quaternary structure, homotrimer. Requires a divalent metal cation as cofactor.

It carries out the reaction 4-CDP-2-C-methyl-D-erythritol 2-phosphate = 2-C-methyl-D-erythritol 2,4-cyclic diphosphate + CMP. It functions in the pathway isoprenoid biosynthesis; isopentenyl diphosphate biosynthesis via DXP pathway; isopentenyl diphosphate from 1-deoxy-D-xylulose 5-phosphate: step 4/6. Its function is as follows. Involved in the biosynthesis of isopentenyl diphosphate (IPP) and dimethylallyl diphosphate (DMAPP), two major building blocks of isoprenoid compounds. Catalyzes the conversion of 4-diphosphocytidyl-2-C-methyl-D-erythritol 2-phosphate (CDP-ME2P) to 2-C-methyl-D-erythritol 2,4-cyclodiphosphate (ME-CPP) with a corresponding release of cytidine 5-monophosphate (CMP). This is 2-C-methyl-D-erythritol 2,4-cyclodiphosphate synthase from Chlorobium phaeovibrioides (strain DSM 265 / 1930) (Prosthecochloris vibrioformis (strain DSM 265)).